The sequence spans 709 residues: ATP-dependent zinc metalloprotease FtsH (709 aa).

The Cytoplasmic portion of the chain corresponds to 1–25 (MKKNKGLNEATTSEKPQFPKRTAWK). The chain crosses the membrane as a helical span at residues 26-46 (IFWWVVILAIIIGILVYILMP). The Extracellular portion of the chain corresponds to 47–171 (RATTAVIEKW…FVAPDTRARD (125 aa)). The chain crosses the membrane as a helical span at residues 172–192 (VLNIFFGLLPIIIFVIFFLLF). The Cytoplasmic portion of the chain corresponds to 193–709 (WRSARGISGG…DTEKDSETNS (517 aa)). 268–275 (GPPGTGKT) is a binding site for ATP. H490 lines the Zn(2+) pocket. The active site involves E491. Zn(2+) contacts are provided by H494 and D569. The disordered stretch occupies residues 673–709 (ILAQKQEQQAKQKAEAKEAKLNKKTEKDTEKDSETNS). The span at 680–709 (QQAKQKAEAKEAKLNKKTEKDTEKDSETNS) shows a compositional bias: basic and acidic residues.

This sequence in the central section; belongs to the AAA ATPase family. In the C-terminal section; belongs to the peptidase M41 family. Homohexamer. Zn(2+) is required as a cofactor.

The protein localises to the cell membrane. Acts as a processive, ATP-dependent zinc metallopeptidase for both cytoplasmic and membrane proteins. Plays a role in the quality control of integral membrane proteins. This Mycoplasma pneumoniae (strain ATCC 29342 / M129 / Subtype 1) (Mycoplasmoides pneumoniae) protein is ATP-dependent zinc metalloprotease FtsH.